The primary structure comprises 280 residues: Acetyl-coenzyme A carboxylase carboxyl transferase subunit beta (280 aa).

The region spanning isoleucine 28 to glutamine 280 is the CoA carboxyltransferase N-terminal domain. Cysteine 32, cysteine 35, cysteine 51, and cysteine 54 together coordinate Zn(2+). A C4-type zinc finger spans residues cysteine 32–cysteine 54.

This sequence belongs to the AccD/PCCB family. In terms of assembly, acetyl-CoA carboxylase is a heterohexamer composed of biotin carboxyl carrier protein (AccB), biotin carboxylase (AccC) and two subunits each of ACCase subunit alpha (AccA) and ACCase subunit beta (AccD). Requires Zn(2+) as cofactor.

The protein resides in the cytoplasm. It carries out the reaction N(6)-carboxybiotinyl-L-lysyl-[protein] + acetyl-CoA = N(6)-biotinyl-L-lysyl-[protein] + malonyl-CoA. It participates in lipid metabolism; malonyl-CoA biosynthesis; malonyl-CoA from acetyl-CoA: step 1/1. In terms of biological role, component of the acetyl coenzyme A carboxylase (ACC) complex. Biotin carboxylase (BC) catalyzes the carboxylation of biotin on its carrier protein (BCCP) and then the CO(2) group is transferred by the transcarboxylase to acetyl-CoA to form malonyl-CoA. This Shouchella clausii (strain KSM-K16) (Alkalihalobacillus clausii) protein is Acetyl-coenzyme A carboxylase carboxyl transferase subunit beta.